The primary structure comprises 191 residues: Small ribosomal subunit protein uS5 (191 aa).

The tract at residues 1–20 is disordered; it reads MAGERERGGRERSRDREERD. The region spanning 23–86 is the S5 DRBM domain; it reads FVDKLVHINR…ESAKRNLTRV (64 aa).

This sequence belongs to the universal ribosomal protein uS5 family. Part of the 30S ribosomal subunit. Contacts proteins S4 and S8.

In terms of biological role, with S4 and S12 plays an important role in translational accuracy. Its function is as follows. Located at the back of the 30S subunit body where it stabilizes the conformation of the head with respect to the body. The chain is Small ribosomal subunit protein uS5 from Nitrobacter winogradskyi (strain ATCC 25391 / DSM 10237 / CIP 104748 / NCIMB 11846 / Nb-255).